The sequence spans 429 residues: Probable electron transfer flavoprotein-quinone oxidoreductase YdiS (429 aa).

8–22 (AIVVGAGVAGSVAAL) contacts FAD.

It belongs to the ETF-QO/FixC family. The cofactor is FAD.

Its function is as follows. Probably accepts electrons from YdiQ/YdiR and reduces a quinone. The chain is Probable electron transfer flavoprotein-quinone oxidoreductase YdiS (ydiS) from Escherichia coli (strain K12).